The primary structure comprises 515 residues: Bifunctional purine biosynthesis protein PurH (515 aa).

The region spanning 1–145 (MTKRALISVS…KNHASVTVVV (145 aa)) is the MGS-like domain.

Belongs to the PurH family.

It catalyses the reaction (6R)-10-formyltetrahydrofolate + 5-amino-1-(5-phospho-beta-D-ribosyl)imidazole-4-carboxamide = 5-formamido-1-(5-phospho-D-ribosyl)imidazole-4-carboxamide + (6S)-5,6,7,8-tetrahydrofolate. The catalysed reaction is IMP + H2O = 5-formamido-1-(5-phospho-D-ribosyl)imidazole-4-carboxamide. It participates in purine metabolism; IMP biosynthesis via de novo pathway; 5-formamido-1-(5-phospho-D-ribosyl)imidazole-4-carboxamide from 5-amino-1-(5-phospho-D-ribosyl)imidazole-4-carboxamide (10-formyl THF route): step 1/1. Its pathway is purine metabolism; IMP biosynthesis via de novo pathway; IMP from 5-formamido-1-(5-phospho-D-ribosyl)imidazole-4-carboxamide: step 1/1. This chain is Bifunctional purine biosynthesis protein PurH, found in Streptococcus suis (strain 98HAH33).